A 227-amino-acid chain; its full sequence is DNA repair protein RecO (227 aa).

It belongs to the RecO family.

Involved in DNA repair and RecF pathway recombination. In Pseudomonas putida (strain W619), this protein is DNA repair protein RecO.